We begin with the raw amino-acid sequence, 248 residues long: 14-3-3 protein homolog 2 (248 aa).

Belongs to the 14-3-3 family.

This is 14-3-3 protein homolog 2 from Echinococcus multilocularis (Fox tapeworm).